We begin with the raw amino-acid sequence, 365 residues long: Probable caffeine synthase 5 (365 aa).

Residue Y18 coordinates S-adenosyl-L-homocysteine. T25 is a binding site for caffeine. S-adenosyl-L-homocysteine contacts are provided by C61, N66, D98, L99, S134, and F135. The caffeine site is built by Y152, H155, and W156. Positions 173, 259, 261, and 262 each coordinate Mg(2+). A caffeine-binding site is contributed by F317.

This sequence belongs to the methyltransferase superfamily. Type-7 methyltransferase family. Mg(2+) serves as cofactor.

The protein operates within alkaloid biosynthesis. May be involved in the biosynthesis of caffeine. This Camellia sinensis (Tea plant) protein is Probable caffeine synthase 5.